The chain runs to 842 residues: Circularly permutated Ras protein 1 (842 aa).

GTP-binding positions include 62 to 66 (DTAGQ), 121 to 124 (NKVD), and 181 to 188 (GGGGVGKS). The tract at residues 253–274 (SGKDKQPSPQQAASPSTIDRTG) is disordered. Over residues 259–274 (PSPQQAASPSTIDRTG) the composition is skewed to polar residues. Positions 377-627 (IIIYCIDVSG…TQNPMIATDV (251 aa)) constitute a VWFA domain.

The protein belongs to the small GTPase superfamily. CpRas family.

The protein is Circularly permutated Ras protein 1 (cpras1) of Dictyostelium discoideum (Social amoeba).